The sequence spans 150 residues: MGRFISVSFGLLVVFLSLSGIGADQECLPGWSFYEGHCYKVFSEYKNWVDAEQYCTEQENGGHLVSFHNREEVDFVVKLGYTILKADIVWIGLRDFWRECHWEWSNGAQLDYKGWSDEPNCFIAYTVGNKWLRRKCSSTQQFICKARVPH.

The signal sequence occupies residues 1–23; sequence MGRFISVSFGLLVVFLSLSGIGA. 3 disulfide bridges follow: cysteine 27/cysteine 38, cysteine 55/cysteine 144, and cysteine 121/cysteine 136. The 112-residue stretch at 34–145 folds into the C-type lectin domain; sequence YEGHCYKVFS…CSSTQQFICK (112 aa).

This sequence belongs to the snaclec family. As to quaternary structure, heterodimer; disulfide-linked. In terms of tissue distribution, expressed by the venom gland.

The protein resides in the secreted. In terms of biological role, interferes with one step of hemostasis (modulation of platelet aggregation, or coagulation cascade, for example). This is Snaclec CTL-Eoc125 from Echis ocellatus (Ocellated saw-scaled viper).